The primary structure comprises 194 residues: Orotate phosphoribosyltransferase (194 aa).

114–122 (EDVVTTGKS) lines the 5-phospho-alpha-D-ribose 1-diphosphate pocket. The orotate site is built by Thr118 and Arg146.

Belongs to the purine/pyrimidine phosphoribosyltransferase family. PyrE subfamily. In terms of assembly, homodimer. It depends on Mg(2+) as a cofactor.

The enzyme catalyses orotidine 5'-phosphate + diphosphate = orotate + 5-phospho-alpha-D-ribose 1-diphosphate. The protein operates within pyrimidine metabolism; UMP biosynthesis via de novo pathway; UMP from orotate: step 1/2. Its function is as follows. Catalyzes the transfer of a ribosyl phosphate group from 5-phosphoribose 1-diphosphate to orotate, leading to the formation of orotidine monophosphate (OMP). The polypeptide is Orotate phosphoribosyltransferase (Clostridioides difficile (strain 630) (Peptoclostridium difficile)).